A 127-amino-acid polypeptide reads, in one-letter code: Fluoride-specific ion channel FluC (127 aa).

4 helical membrane passes run 4 to 24, 34 to 54, 65 to 85, and 97 to 117; these read IIYIFIGGGMGSVTRYLTQIA, FPFPWGTFAVNIIGSLLIGFF, FELRLFLTVGFCGGFTTFSTL, and FYGIFTFYVFISILLGLLAVL. Residues G77 and T80 each contribute to the Na(+) site.

This sequence belongs to the fluoride channel Fluc/FEX (TC 1.A.43) family.

The protein localises to the cell inner membrane. The enzyme catalyses fluoride(in) = fluoride(out). Na(+) is not transported, but it plays an essential structural role and its presence is essential for fluoride channel function. Fluoride-specific ion channel. Important for reducing fluoride concentration in the cell, thus reducing its toxicity. The sequence is that of Fluoride-specific ion channel FluC from Bacteroides fragilis (strain ATCC 25285 / DSM 2151 / CCUG 4856 / JCM 11019 / LMG 10263 / NCTC 9343 / Onslow / VPI 2553 / EN-2).